An 887-amino-acid polypeptide reads, in one-letter code: Degenerin-like protein unc-105 (887 aa).

The segment at 1–33 (MAEDRIKSKLRRPASIESTMSSRTKPRHKPSPM) is disordered. Over 1–93 (MAEDRIKSKL…AATADGKWRW (93 aa)) the chain is Cytoplasmic. Residues 94-114 (FWYTAFTICLLALLIQIFFLI) traverse the membrane as a helical segment. The Extracellular segment spans residues 115 to 698 (SKYRQYGKTV…SVLADLGGLT (584 aa)). N-linked (GlcNAc...) asparagine glycosylation is found at asparagine 244, asparagine 450, asparagine 473, asparagine 581, and asparagine 599. Residues 699-719 (GLWIGASVVSLLEIVTLIVFA) traverse the membrane as a helical segment. The Cytoplasmic segment spans residues 720-887 (TQAYVRKRKG…YSAPYEHRKK (168 aa)). Disordered stretches follow at residues 794–815 (AIQE…NGSC) and 859–887 (SNSE…HRKK).

This sequence belongs to the amiloride-sensitive sodium channel (TC 1.A.6) family. In terms of tissue distribution, expressed in body wall muscle.

The protein resides in the membrane. Functionally, ion channel which is permeable to small monovalent cations. Shown not to be H+-ion gated. May be mechanosensitive and is required for growth and muscle development. This chain is Degenerin-like protein unc-105 (unc-105), found in Caenorhabditis elegans.